The chain runs to 905 residues: Protein translocase subunit SecA (905 aa).

ATP is bound by residues Gln87, 105–109, and Asp509; that span reads GEGKT. Zn(2+) is bound by residues Cys890, Cys892, Cys901, and His902.

The protein belongs to the SecA family. Monomer and homodimer. Part of the essential Sec protein translocation apparatus which comprises SecA, SecYEG and auxiliary proteins SecDF-YajC and YidC. The cofactor is Zn(2+).

It is found in the cell inner membrane. The protein resides in the cytoplasm. It carries out the reaction ATP + H2O + cellular proteinSide 1 = ADP + phosphate + cellular proteinSide 2.. Part of the Sec protein translocase complex. Interacts with the SecYEG preprotein conducting channel. Has a central role in coupling the hydrolysis of ATP to the transfer of proteins into and across the cell membrane, serving both as a receptor for the preprotein-SecB complex and as an ATP-driven molecular motor driving the stepwise translocation of polypeptide chains across the membrane. The protein is Protein translocase subunit SecA of Acinetobacter baylyi (strain ATCC 33305 / BD413 / ADP1).